Reading from the N-terminus, the 530-residue chain is Cation transporter HKT2;1 (530 aa).

Residues 1-40 (MTSIYHDFIHNKLQSFGRIGRYFVNFVVLAHRFIALHIHP) lie on the Cytoplasmic side of the membrane. Transmembrane regions (helical) follow at residues 41-61 (FWIQ…LLMF) and 102-122 (IVVI…FLGL). The Cytoplasmic segment spans residues 123 to 186 (MLRLNHKHNP…DLKRSKRLRW (64 aa)). 2 helical membrane passes run 187–207 (FLGF…FLLV) and 260–280 (GLLL…PLFL). Over 281-317 (RLLIWFLGKVTKLRELKLMIKNPEELQYDYLLPKLPT) the chain is Cytoplasmic. A run of 2 helical transmembrane segments spans residues 318-338 (AFLA…FGAV) and 372-392 (IDCS…MYLP). At 393–418 (PSTTFALSNGDEKTANKKAKRKLGLV) the chain is on the cytoplasmic side. The next 2 membrane-spanning stretches (helical) occupy residues 419-439 (VQNL…VAFI) and 494-514 (SLSG…MLYG). The Cytoplasmic segment spans residues 515-530 (RLKAFTKGTGEYWRLW).

Belongs to the TrkH potassium transport family. HKT (TC 2.A.38.3) subfamily. As to expression, expressed in epidermis and vascular tissue of endodermis in roots, and in cells surrounding the vasculature in leaves.

Its subcellular location is the membrane. The catalysed reaction is Na(+)(in) = Na(+)(out). Its function is as follows. Seems to be involved in regulation of potassium-sodium homeostasis. Seems to act as a high-affinity sodium transporter, which mediates increased sodium uptake in roots under potassium deficiency and contributes to sodium accumulation and salt toxicity. Involved in nutritional sodium uptake and distribution in potassium-starved roots to allow plant growth. May also act as a potassium transporter. Functions as a sodium-potassium cotransporter. The polypeptide is Cation transporter HKT2;1 (Oryza sativa subsp. indica (Rice)).